Consider the following 900-residue polypeptide: Probable beta-mannosidase (900 aa).

The first 21 residues, Met1–Gly21, serve as a signal peptide directing secretion. Residues Asn38, Asn42, and Asn131 are each glycosylated (N-linked (GlcNAc...) asparagine). Residue Glu463 is the Proton donor of the active site. Asn477, Asn576, Asn661, and Asn738 each carry an N-linked (GlcNAc...) asparagine glycan.

It belongs to the glycosyl hydrolase 2 family.

Its subcellular location is the lysosome. It catalyses the reaction Hydrolysis of terminal, non-reducing beta-D-mannose residues in beta-D-mannosides.. In Caenorhabditis elegans, this protein is Probable beta-mannosidase.